Here is a 147-residue protein sequence, read N- to C-terminus: EPSGNSLSSALNELLDKNNNYAIPKVAIIFDDFKSSLTGGDDGLIDNVIEVLNTVKVSINSVTENNNWTPLHFAIYFKKNPAVSAVLILENKDIEARTSIMLIVQKLLLELYNYFINNYAETLDEEALFNRLDEQGKLELALIMHNK.

4 ANK repeats span residues 57–59 (VSI), 66–78 (NNWTPLHFAIYFK), 79–96 (KNPAVSAVLILENKDIEA), and 98–125 (TSIMLIVQKLLLELYNYFINNYAETLDE).

This sequence belongs to the cationic peptide 01 (latrotoxin) family. 04 (delta-latroinsectotoxin) subfamily. As to quaternary structure, homotetramer in membrane. As to expression, expressed by the venom gland.

The protein resides in the secreted. It is found in the target cell membrane. Insecticidal presynaptic neurotoxin that induces massive neurotransmitter release at insect (but not vertebrate) neuromuscular junctions. Native toxin forms cation-permeable pores (with high permeability to calcium) in lipid membranes locust muscle membrane and artificial lipid bilayers. May bind to insect neurexin-1 homolog, insect adhesion G protein-coupled receptor L1 homolog, and insect receptor-type tyrosine-protein phosphatase S homolog, and induces neurotransmitter exocytosis both by forming tetrameric pores in membranes and signaling via G protein-coupled receptor. Oligomerization is a process independent of divalent cations. The chain is Delta-latroinsectotoxin-Lhe1a from Latrodectus hesperus (Western black widow spider).